Reading from the N-terminus, the 252-residue chain is MARRRRRHRGPRRPRPPGPTGAVPTAQSQVTSTPNSEPVVRSAPAAAPPPPPAGGPPPSCSLLLRQWLQVPESASDDDDDDDWPDSPPPEPAPEARPTAAAPRPRSPPPGAGPGGGADPSHPPSRPFRLPPRLALRLRVTAEHLARLRLRRAGGEGAPEPPATPATPATPATPATPATPARVRFSPHVRVRHLVVWASAARLARRGSWARERADRARFRRRVAEAEAVIGPCLGPKARARALARGAGPANSV.

Basic residues predominate over residues 1 to 15 (MARRRRRHRGPRRPR). A required for nucleolar localization region spans residues 1–17 (MARRRRRHRGPRRPRPP). Disordered regions lie at residues 1–129 (MARR…PFRL) and 150–179 (RRAG…PATP). The span at 25–36 (TAQSQVTSTPNS) shows a compositional bias: polar residues. The segment covering 46–59 (AAPPPPPAGGPPPS) has biased composition (pro residues). Residues 74–84 (ASDDDDDDDWP) are compositionally biased toward acidic residues. Pro residues-rich tracts occupy residues 85 to 94 (DSPPPEPAPE) and 120 to 129 (SHPPSRPFRL). A Nuclear export signal motif is present at residues 129 to 138 (LPPRLALRLR). A run of 6 repeats spans residues 162 to 164 (ATP), 165 to 167 (ATP), 168 to 170 (ATP), 171 to 173 (ATP), 174 to 176 (ATP), and 177 to 179 (ATP). The segment at 162–179 (ATPATPATPATPATPATP) is 6 X 3 AA tandem repeats of A-T-P. Positions 165–179 (ATPATPATPATPATP) are enriched in low complexity. The segment at 179–192 (PARVRFSPHVRVRH) is binding to PP1CA. Residues 179 to 192 (PARVRFSPHVRVRH) are interaction with host PPP1CA. Positions 194–252 (VVWASAARLARRGSWARERADRARFRRRVAEAEAVIGPCLGPKARARALARGAGPANSV) are important for interferon resistance. The short motif at 204–222 (RRGSWARERADRARFRRRV) is the Bipartite nuclear localization signal element. An interaction with host EIF2S1/EIF-2ALPHA region spans residues 222-237 (VAEAEAVIGPCLGPKA).

This sequence belongs to the PPP1R15 family. Interacts with host PPP1CA to form a high-molecular-weight complex that dephosphorylates EIF2S1/eIF-2alpha. Interacts with host EIF2S1/eIF-2alpha; this interaction is crucial for the specific dephosphorylation of EIF2S1/eIF-2alpha by PPP1CA. Binds to proliferating cell nuclear antigen (PCNA), which may release host cells from growth arrest and facilitate viral replication. Interacts (via N-terminus) with host C1QBP and PRKCA. Interacts with protein UL31. Interacts with host TBK1. Interacts with host STING/TMEM173; this interaction inhibits the intracellular DNA sensing pathway. Interacts with host BECN1; this interaction modulates host autophagy.

The protein localises to the host cytoplasm. The protein resides in the host nucleus. Its subcellular location is the host nucleolus. It is found in the virion. Inhibits the establishment of the immune response and of the integrated stress response (ISR) in the infected cell. Plays essential roles in viral nuclear egress to mediate capsid transit across the nuclear membrane. Facilitates nuclear egress cooperatively with host C1QBP and protein kinase C/PKC to induce lamin A/C phosphorylation and subsequent reorganization. In turn, lamina disassembles and nuclear egress occurs. Recruits the serine/threonine protein phosphatase PPP1CA/PP1-alpha to dephosphorylate the translation initiation factor EIF2S1/eIF-2alpha, thereby couteracting the host shutoff of protein synthesis involving double-stranded RNA-dependent protein kinase EIF2AK2/PKR. In turn, controls host IRF3 activation and subsequently inhibits host interferon response. Controls the DNA sensing pathway by interacting with and inhibiting host STING/TMEM173. Also down-modulates the host MHC class II proteins cell surface expression. Acts as a neurovirulence factor that has a profound effect on the growth of the virus in central nervous system tissue, by interacting with host BECN1 and thereby antagonizing the host autophagy response. The chain is Neurovirulence factor ICP34.5 (RL1) from Human herpesvirus 1 (strain CVG-2) (HHV-1).